We begin with the raw amino-acid sequence, 352 residues long: Ketoisovalerate oxidoreductase subunit VorB (352 aa).

Heterotrimer of the VorA, VorB and VorC subunits.

It carries out the reaction 3-methyl-2-oxobutanoate + 2 oxidized [2Fe-2S]-[ferredoxin] + CoA = 2-methylpropanoyl-CoA + 2 reduced [2Fe-2S]-[ferredoxin] + CO2 + H(+). The protein is Ketoisovalerate oxidoreductase subunit VorB (vorB) of Methanothermobacter thermautotrophicus (strain ATCC 29096 / DSM 1053 / JCM 10044 / NBRC 100330 / Delta H) (Methanobacterium thermoautotrophicum).